The chain runs to 478 residues: Ribulose bisphosphate carboxylase large chain (478 aa).

A propeptide spanning residues 1–2 (MS) is cleaved from the precursor. Proline 3 carries the N-acetylproline modification. Lysine 14 bears the N6,N6,N6-trimethyllysine mark. The substrate site is built by asparagine 123 and threonine 173. The active-site Proton acceptor is the lysine 175. Substrate is bound at residue lysine 177. Mg(2+)-binding residues include lysine 201, aspartate 203, and glutamate 204. An N6-carboxylysine modification is found at lysine 201. The Proton acceptor role is filled by histidine 294. Substrate contacts are provided by arginine 295, histidine 327, and serine 379.

The protein belongs to the RuBisCO large chain family. Type I subfamily. As to quaternary structure, heterohexadecamer of 8 large chains and 8 small chains; disulfide-linked. The disulfide link is formed within the large subunit homodimers. Requires Mg(2+) as cofactor. The disulfide bond which can form in the large chain dimeric partners within the hexadecamer appears to be associated with oxidative stress and protein turnover.

The protein resides in the plastid. It localises to the chloroplast. The enzyme catalyses 2 (2R)-3-phosphoglycerate + 2 H(+) = D-ribulose 1,5-bisphosphate + CO2 + H2O. It catalyses the reaction D-ribulose 1,5-bisphosphate + O2 = 2-phosphoglycolate + (2R)-3-phosphoglycerate + 2 H(+). Functionally, ruBisCO catalyzes two reactions: the carboxylation of D-ribulose 1,5-bisphosphate, the primary event in carbon dioxide fixation, as well as the oxidative fragmentation of the pentose substrate in the photorespiration process. Both reactions occur simultaneously and in competition at the same active site. The protein is Ribulose bisphosphate carboxylase large chain of Neurachne tenuifolia.